We begin with the raw amino-acid sequence, 2974 residues long: Mediator of RNA polymerase II transcription subunit 13 (2974 aa).

Basic and acidic residues-rich tracts occupy residues 284–299 (EKEP…KTPE), 340–367 (MFEP…AREV), 374–390 (RREE…RADD), and 624–633 (SREKRKEYQP). Disordered stretches follow at residues 284-309 (EKEP…PQTT), 340-394 (MFEP…NLED), 624-654 (SREK…KRKV), 677-749 (FNAW…FADI), 764-801 (LYNP…PKEE), 1032-1063 (PHGS…QDGE), 1099-1134 (GMLS…YPTP), 1140-1159 (LQAD…FRST), 1281-1342 (TLAR…TPTY), 1416-1486 (QGGL…DATA), 2052-2078 (ELKK…ATPA), and 2247-2309 (QDEA…PAGM). Residues 351–396 (KEETAAEKEKRMAAREVRRLRRQRREERRREMEKQRRADDNLEDYD) are a coiled coil. 2 stretches are compositionally biased toward basic residues: residues 634–654 (YHRK…KRKV) and 677–688 (FNAWKQKKKGPP). Residues 689–717 (PKKDLAKKEAAADKDKDKDKEKDKEKDKD) are compositionally biased toward basic and acidic residues. Residues 1035–1048 (SFDHDSEPEFDEQR) are compositionally biased toward basic and acidic residues. Polar residues-rich tracts occupy residues 1122–1134 (IESQ…YPTP) and 1140–1149 (LQADASQAHS). Pro residues-rich tracts occupy residues 1284-1299 (RPPP…PTPM) and 1326-1340 (PAYP…PTTP). Positions 1443 to 1464 (IRNTDAPNDPTVSKLQSAVSRN) are enriched in polar residues. The segment covering 1473–1486 (AATSIPTATDDATA) has biased composition (low complexity). The span at 2064–2073 (STQSENSEGN) shows a compositional bias: polar residues. The stretch at 2220–2301 (AVEGRLKRQK…EQYPAEESQA (82 aa)) forms a coiled coil. Composition is skewed to basic and acidic residues over residues 2247–2258 (QDEADKREKMDE) and 2281–2292 (EEKKRNKQKENE). Positions 2347-2974 (WKQRDTRVQN…LYHSVARLLV (628 aa)) are mediates transcriptional repression.

The protein belongs to the Mediator complex subunit 13 family. Component of the Mediator complex.

It localises to the nucleus. In terms of biological role, component of the Mediator complex, a coactivator involved in regulated gene transcription of nearly all RNA polymerase II-dependent genes. Mediator functions as a bridge to convey information from gene-specific regulatory proteins to the basal RNA polymerase II transcription machinery. Mediator is recruited to promoters by direct interactions with regulatory proteins and serves as a scaffold for the assembly of a functional preinitiation complex with RNA polymerase II and the general transcription factors. This chain is Mediator of RNA polymerase II transcription subunit 13 (let-19), found in Caenorhabditis briggsae.